Consider the following 432-residue polypeptide: Trigger factor (432 aa).

The PPIase FKBP-type domain occupies 161–246 (GTRATINFVG…VVKVEARELP (86 aa)).

Belongs to the FKBP-type PPIase family. Tig subfamily.

Its subcellular location is the cytoplasm. It catalyses the reaction [protein]-peptidylproline (omega=180) = [protein]-peptidylproline (omega=0). Involved in protein export. Acts as a chaperone by maintaining the newly synthesized protein in an open conformation. Functions as a peptidyl-prolyl cis-trans isomerase. The protein is Trigger factor of Aliivibrio salmonicida (strain LFI1238) (Vibrio salmonicida (strain LFI1238)).